Here is a 472-residue protein sequence, read N- to C-terminus: Putative F-box/LRR-repeat protein At5g54820 (472 aa).

Residues 6 to 54 form the F-box domain; the sequence is QDRLSSLPDILLIMIISFLPLKECVRTSVLSKRWRYLCLETTNLSFKES. LRR repeat units lie at residues 58-87, 135-164, 183-208, 225-250, 283-308, and 338-363; these read NPDITDAEYSRIVAYRSFFCSVDKWVSITQ, NGDISYRHFMYTLPKSVYSLTTLESLKIYG, IGWVRLENLHSLLSKSPSLQSLSIKN, VIEHSDFSYMQCAFELPRIHSFKYSG, SSRISGEVISRIINDLRAAETLTVCP, and MHTKEFNGIILLLNNCPNLETLGFDI.

This chain is Putative F-box/LRR-repeat protein At5g54820, found in Arabidopsis thaliana (Mouse-ear cress).